The following is a 159-amino-acid chain: Ribosomal RNA large subunit methyltransferase H (159 aa).

Residues L76, G108, and 127 to 132 (FSKMTF) each bind S-adenosyl-L-methionine.

Belongs to the RNA methyltransferase RlmH family. As to quaternary structure, homodimer.

The protein localises to the cytoplasm. The catalysed reaction is pseudouridine(1915) in 23S rRNA + S-adenosyl-L-methionine = N(3)-methylpseudouridine(1915) in 23S rRNA + S-adenosyl-L-homocysteine + H(+). Its function is as follows. Specifically methylates the pseudouridine at position 1915 (m3Psi1915) in 23S rRNA. The polypeptide is Ribosomal RNA large subunit methyltransferase H (Staphylococcus aureus (strain Mu3 / ATCC 700698)).